The primary structure comprises 243 residues: Adenosylcobinamide-GDP ribazoletransferase (243 aa).

Transmembrane regions (helical) follow at residues 31 to 51 (LLFY…FNTL), 55 to 75 (APLM…SGGL), 109 to 129 (IAVV…LALI), 133 to 153 (ASVW…GLFL), and 188 to 208 (VLLA…CFFW).

Belongs to the CobS family. The cofactor is Mg(2+).

Its subcellular location is the cell inner membrane. It catalyses the reaction alpha-ribazole + adenosylcob(III)inamide-GDP = adenosylcob(III)alamin + GMP + H(+). The catalysed reaction is alpha-ribazole 5'-phosphate + adenosylcob(III)inamide-GDP = adenosylcob(III)alamin 5'-phosphate + GMP + H(+). It functions in the pathway cofactor biosynthesis; adenosylcobalamin biosynthesis; adenosylcobalamin from cob(II)yrinate a,c-diamide: step 7/7. Its function is as follows. Joins adenosylcobinamide-GDP and alpha-ribazole to generate adenosylcobalamin (Ado-cobalamin). Also synthesizes adenosylcobalamin 5'-phosphate from adenosylcobinamide-GDP and alpha-ribazole 5'-phosphate. The protein is Adenosylcobinamide-GDP ribazoletransferase of Pseudomonas syringae pv. syringae (strain B728a).